The sequence spans 107 residues: Putative double-stranded DNA mimic protein NTHI1680 (107 aa).

It belongs to the putative dsDNA mimic protein family.

May act as a double-stranded DNA (dsDNA) mimic. Probably regulates the activity of a dsDNA-binding protein. This Haemophilus influenzae (strain 86-028NP) protein is Putative double-stranded DNA mimic protein NTHI1680.